Reading from the N-terminus, the 874-residue chain is Probable RNA-directed RNA polymerase (874 aa).

Belongs to the totiviridae RNA-directed RNA polymerase family.

The catalysed reaction is RNA(n) + a ribonucleoside 5'-triphosphate = RNA(n+1) + diphosphate. RNA-dependent RNA polymerase which replicates the viral genome. Catalyzes the transcription of fully conservative plus-strand genomic RNAs that are extruded from the virion into the cytoplasm where they function as mRNAs for translation of viral proteins and also as substrates for encapsidation to form new virions. Once encapsidated, the positive strand is converted to dsRNA by the RNA-directed RNA polymerase. Displays ssRNA-binding activity. The protein is Probable RNA-directed RNA polymerase (ORF3) of Leishmania major (LRV-1-1).